The following is a 78-amino-acid chain: Large ribosomal subunit protein bL28B (78 aa).

The tract at residues 1–29 is disordered; it reads MSAHCQVTGRKPGFGNTVSHSHRRSRRRW. The span at 20–29 shows a compositional bias: basic residues; that stretch reads HSHRRSRRRW.

It belongs to the bacterial ribosomal protein bL28 family.

This chain is Large ribosomal subunit protein bL28B (rpmB2), found in Mycobacterium bovis (strain ATCC BAA-935 / AF2122/97).